Here is a 276-residue protein sequence, read N- to C-terminus: Radial spoke head protein 9 homolog (276 aa).

This sequence belongs to the flagellar radial spoke RSP9 family. Component of the axonemal radial spoke 1 (RS1) and 2 (RS2) complexes, at least composed of spoke head proteins RSPH1, RSPH3, RSPH9 and the cilia-specific component RSPH4A or sperm-specific component RSPH6A, spoke stalk proteins RSPH14, DNAJB13, DYDC1, ROPN1L and NME5, and the RS1 complex-specific anchor protein IQUB. Interacts with IQUB. Interacts with RSPH3B. Interacts with RSPH4A. Interacts with RSPH6A. Interacts with CFAP61. Interacts with LRRC23.

The protein localises to the cytoplasm. It localises to the cytoskeleton. It is found in the cilium axoneme. Its subcellular location is the flagellum axoneme. The protein resides in the cell projection. The protein localises to the kinocilium. Functionally, functions as part of axonemal radial spoke complexes that play an important part in the motility of sperm and cilia. Essential for both the radial spoke head assembly and the central pair microtubule stability in ependymal motile cilia. Required for motility of olfactory and neural cilia and for the structural integrity of ciliary axonemes in both 9+0 and 9+2 motile cilia. The protein is Radial spoke head protein 9 homolog (RSPH9) of Bos taurus (Bovine).